A 361-amino-acid polypeptide reads, in one-letter code: dTDP-glucose 4,6-dehydratase (361 aa).

Residues 11 to 12, 32 to 35, 58 to 59, 80 to 84, and Thr99 contribute to the NAD(+) site; these read FI, DKLT, DI, and LAAES. Position 84 (Ser84) interacts with substrate. Thr133 is a substrate binding site. Catalysis depends on Asp134, which acts as the Proton donor. Active-site proton acceptor residues include Glu135 and Tyr167. 167–171 is a binding site for NAD(+); sequence YSASK. Position 196 (Asn196) interacts with substrate. Asn197 is a binding site for NAD(+). Substrate contacts are provided by residues 206-207, 222-224, Arg231, Asn266, 296-300, and Tyr357; these read KL, PIY, and DRPGH.

It belongs to the NAD(P)-dependent epimerase/dehydratase family. dTDP-glucose dehydratase subfamily. In terms of assembly, homodimer. It depends on NAD(+) as a cofactor.

It carries out the reaction dTDP-alpha-D-glucose = dTDP-4-dehydro-6-deoxy-alpha-D-glucose + H2O. Its pathway is carbohydrate biosynthesis; dTDP-L-rhamnose biosynthesis. It functions in the pathway bacterial outer membrane biogenesis; LPS O-antigen biosynthesis. Catalyzes the dehydration of dTDP-D-glucose to form dTDP-6-deoxy-D-xylo-4-hexulose via a three-step process involving oxidation, dehydration and reduction. In Salmonella typhimurium (strain LT2 / SGSC1412 / ATCC 700720), this protein is dTDP-glucose 4,6-dehydratase.